A 457-amino-acid polypeptide reads, in one-letter code: tRNA-2-methylthio-N(6)-dimethylallyladenosine synthase (457 aa).

Positions 3-120 (KKVYVKTFGC…LPQMIDARRE (118 aa)) constitute an MTTase N-terminal domain. [4Fe-4S] cluster-binding residues include C12, C49, C83, C157, C161, and C164. In terms of domain architecture, Radical SAM core spans 143-377 (RVEGPSAFVS…QATIEENVAR (235 aa)). Residues 380–447 (QSMVGKVERI…PHSLRGELVL (68 aa)) enclose the TRAM domain.

This sequence belongs to the methylthiotransferase family. MiaB subfamily. As to quaternary structure, monomer. [4Fe-4S] cluster is required as a cofactor.

It localises to the cytoplasm. It catalyses the reaction N(6)-dimethylallyladenosine(37) in tRNA + (sulfur carrier)-SH + AH2 + 2 S-adenosyl-L-methionine = 2-methylsulfanyl-N(6)-dimethylallyladenosine(37) in tRNA + (sulfur carrier)-H + 5'-deoxyadenosine + L-methionine + A + S-adenosyl-L-homocysteine + 2 H(+). Functionally, catalyzes the methylthiolation of N6-(dimethylallyl)adenosine (i(6)A), leading to the formation of 2-methylthio-N6-(dimethylallyl)adenosine (ms(2)i(6)A) at position 37 in tRNAs that read codons beginning with uridine. The protein is tRNA-2-methylthio-N(6)-dimethylallyladenosine synthase of Burkholderia lata (strain ATCC 17760 / DSM 23089 / LMG 22485 / NCIMB 9086 / R18194 / 383).